The chain runs to 546 residues: Chaperonin GroEL 2 (546 aa).

ATP-binding positions include T29 to P32, D86 to T90, G418, N482 to A484, and D498.

This sequence belongs to the chaperonin (HSP60) family. As to quaternary structure, forms a cylinder of 14 subunits composed of two heptameric rings stacked back-to-back. Interacts with the co-chaperonin GroES.

It is found in the cytoplasm. It carries out the reaction ATP + H2O + a folded polypeptide = ADP + phosphate + an unfolded polypeptide.. In terms of biological role, together with its co-chaperonin GroES, plays an essential role in assisting protein folding. The GroEL-GroES system forms a nano-cage that allows encapsulation of the non-native substrate proteins and provides a physical environment optimized to promote and accelerate protein folding. The chain is Chaperonin GroEL 2 from Corynebacterium diphtheriae (strain ATCC 700971 / NCTC 13129 / Biotype gravis).